Reading from the N-terminus, the 884-residue chain is Alanine--tRNA ligase (884 aa).

H572, H576, C673, and H677 together coordinate Zn(2+).

Belongs to the class-II aminoacyl-tRNA synthetase family. It depends on Zn(2+) as a cofactor.

It localises to the cytoplasm. The enzyme catalyses tRNA(Ala) + L-alanine + ATP = L-alanyl-tRNA(Ala) + AMP + diphosphate. In terms of biological role, catalyzes the attachment of alanine to tRNA(Ala) in a two-step reaction: alanine is first activated by ATP to form Ala-AMP and then transferred to the acceptor end of tRNA(Ala). Also edits incorrectly charged Ser-tRNA(Ala) and Gly-tRNA(Ala) via its editing domain. The chain is Alanine--tRNA ligase from Xylella fastidiosa (strain M12).